A 498-amino-acid chain; its full sequence is uncharacterized protein (498 aa).

A run of 11 helical transmembrane segments spans residues 54-74 (LLKM…MAFL), 100-120 (VAVS…VVLV), 128-148 (MLAF…FMSS), 150-170 (GGLI…FPAL), 188-208 (SYLF…AYAL), 221-241 (WIYI…LFAL), 302-322 (VLYG…FVGL), 326-346 (YMTI…AWLS), 353-373 (AVYL…MLAS), 381-401 (TATY…LGWL), and 446-466 (AFTL…FFSL).

The protein belongs to the major facilitator superfamily. Allantoate permease family.

The protein resides in the membrane. This is an uncharacterized protein from Schizosaccharomyces pombe (strain 972 / ATCC 24843) (Fission yeast).